A 436-amino-acid chain; its full sequence is MQGTPGGGTRPGPSPVDRRTLLVFSFILAAALGQMNFTGDQVLRVLAKDEKQLSLLGDLEGLKPQKVDFWRGPARPSLPVDMRVPFSELKDIKAYLESHGLAYSIMIKDIQVLLDEERQAMAKSRRLERSTNSFSYSSYHTLEEIYSWIDNFVMEHSDIVSKIQIGNSFENQSILVLKFSTGGSRHPAIWIDTGIHSREWITHATGIWTANKIVSDYGKDRVLTDILNAMDIFIELVTNPDGFAFTHSMNRLWRKNKSIRPGIFCIGVDLNRNWKSGFGGNGSNSNPCSETYHGPSPQSEPEVAAIVNFITAHGNFKALISIHSYSQMLMYPYGRLLEPVSNQRELYDLAKDAVEALYKVHGIEYIFGSISTTLYVASGITVDWAYDSGIKYAFSFELRDTGQYGFLLPATQIIPTAQETWMALRTIMEHTLNHPY.

The signal sequence occupies residues 1-33 (MQGTPGGGTRPGPSPVDRRTLLVFSFILAAALG). The propeptide at 34-126 (QMNFTGDQVL…ERQAMAKSRR (93 aa)) is activation peptide. In terms of domain architecture, Peptidase M14 spans 138-431 (SYHTLEEIYS…MALRTIMEHT (294 aa)). Positions 196 and 199 each coordinate Zn(2+). Substrate-binding positions include 196–199 (HSRE), Arg-254, and 271–272 (NR). The cysteines at positions 265 and 288 are disulfide-linked. Zn(2+) is bound at residue His-323. Substrate is bound by residues 324–325 (SY) and Tyr-375. Glu-397 acts as the Proton donor/acceptor in catalysis.

Belongs to the peptidase M14 family. Zn(2+) is required as a cofactor. Expression is very low or not detectable.

It localises to the secreted. This chain is Carboxypeptidase A5 (CPA5), found in Homo sapiens (Human).